A 245-amino-acid chain; its full sequence is tRNA1(Val) (adenine(37)-N6)-methyltransferase (245 aa).

The protein belongs to the methyltransferase superfamily. tRNA (adenine-N(6)-)-methyltransferase family.

It localises to the cytoplasm. The catalysed reaction is adenosine(37) in tRNA1(Val) + S-adenosyl-L-methionine = N(6)-methyladenosine(37) in tRNA1(Val) + S-adenosyl-L-homocysteine + H(+). Functionally, specifically methylates the adenine in position 37 of tRNA(1)(Val) (anticodon cmo5UAC). The protein is tRNA1(Val) (adenine(37)-N6)-methyltransferase of Shigella dysenteriae serotype 1 (strain Sd197).